An 87-amino-acid polypeptide reads, in one-letter code: Small ribosomal subunit protein uS15c (87 aa).

The protein belongs to the universal ribosomal protein uS15 family. As to quaternary structure, part of the 30S ribosomal subunit.

It localises to the plastid. The protein resides in the chloroplast. The polypeptide is Small ribosomal subunit protein uS15c (rps15) (Oenothera glazioviana (Large-flowered evening primrose)).